Here is a 225-residue protein sequence, read N- to C-terminus: Small ribosomal subunit protein uS2 (225 aa).

The protein belongs to the universal ribosomal protein uS2 family.

The chain is Small ribosomal subunit protein uS2 from Metallosphaera sedula (strain ATCC 51363 / DSM 5348 / JCM 9185 / NBRC 15509 / TH2).